A 382-amino-acid chain; its full sequence is MQDAAPRLTFTLRDEERLMMKIGVFVPIGNNGWLISTHAPQYMPTFELNKAIVQKAEHYHFDFALSMIKLRGFGGKTEFWDHNLESFTLMAGLAAVTSRIQIYATAATLTLPPAIVARMAATIDSISGGRFGVNLVTGWQKPEYEQMGIWPGDDYFSRRYDYLTEYVQVLRDLWGSGKSDFKGDFFTMDDCRVSPQPSVPMKVICAGQSDAGMAFSARYADFNFCFGKGVNTPTAFAPTAARMKQAAEQTGRDVGSYVLFMVIADETDDAARAKWEHYKAGADEEALSWLTEQSQKDTRSGTDTNVRQMADPTSAVNINMGTLVGSYASVARMLDEVASVPGAEGVLLTFDDFLSGIENFGERIQPLMQCRAHLPALTQEVA.

FMN-binding positions include 68–69 (IK), Asn134, Glu143, 159–160 (RY), and Ser209.

The protein belongs to the NtaA/SnaA/DszA monooxygenase family. RutA subfamily.

The enzyme catalyses uracil + FMNH2 + NADH + O2 = (Z)-3-ureidoacrylate + FMN + NAD(+) + H2O + H(+). The catalysed reaction is thymine + FMNH2 + NADH + O2 = (Z)-2-methylureidoacrylate + FMN + NAD(+) + H2O + H(+). Its function is as follows. Catalyzes the pyrimidine ring opening between N-3 and C-4 by an unusual flavin hydroperoxide-catalyzed mechanism, adding oxygen atoms in the process to yield ureidoacrylate peracid, that immediately reacts with FMN forming ureidoacrylate and FMN-N(5)-oxide. The FMN-N(5)-oxide reacts spontaneously with NADH to produce FMN. Requires the flavin reductase RutF to regenerate FMN in vivo. This Escherichia coli O45:K1 (strain S88 / ExPEC) protein is Pyrimidine monooxygenase RutA.